The sequence spans 247 residues: 1-(5-phosphoribosyl)-5-[(5-phosphoribosylamino)methylideneamino] imidazole-4-carboxamide isomerase (247 aa).

Asp8 acts as the Proton acceptor in catalysis. The Proton donor role is filled by Asp129.

This sequence belongs to the HisA/HisF family.

It is found in the cytoplasm. It catalyses the reaction 1-(5-phospho-beta-D-ribosyl)-5-[(5-phospho-beta-D-ribosylamino)methylideneamino]imidazole-4-carboxamide = 5-[(5-phospho-1-deoxy-D-ribulos-1-ylimino)methylamino]-1-(5-phospho-beta-D-ribosyl)imidazole-4-carboxamide. Its pathway is amino-acid biosynthesis; L-histidine biosynthesis; L-histidine from 5-phospho-alpha-D-ribose 1-diphosphate: step 4/9. This is 1-(5-phosphoribosyl)-5-[(5-phosphoribosylamino)methylideneamino] imidazole-4-carboxamide isomerase from Rhodospirillum centenum (strain ATCC 51521 / SW).